The following is a 466-amino-acid chain: Siroheme synthase (466 aa).

Residues 1-203 are precorrin-2 dehydrogenase /sirohydrochlorin ferrochelatase; the sequence is MNYLPIFIDI…GKIQEAKADL (203 aa). Residues 22-23 and 43-44 contribute to the NAD(+) site; these read SI and KS. Ser-128 bears the Phosphoserine mark. Residues 216–466 are uroporphyrinogen-III C-methyltransferase; it reads GAVYLVGGGP…FDAKPISSKK (251 aa). Pro-225 lines the S-adenosyl-L-methionine pocket. The active-site Proton acceptor is the Asp-248. The active-site Proton donor is the Lys-270. Residues 301-303, Ile-306, 331-332, Met-383, and Gly-412 each bind S-adenosyl-L-methionine; these read GGD and TA.

The protein in the N-terminal section; belongs to the precorrin-2 dehydrogenase / sirohydrochlorin ferrochelatase family. It in the C-terminal section; belongs to the precorrin methyltransferase family.

It catalyses the reaction uroporphyrinogen III + 2 S-adenosyl-L-methionine = precorrin-2 + 2 S-adenosyl-L-homocysteine + H(+). The catalysed reaction is precorrin-2 + NAD(+) = sirohydrochlorin + NADH + 2 H(+). It carries out the reaction siroheme + 2 H(+) = sirohydrochlorin + Fe(2+). It participates in cofactor biosynthesis; adenosylcobalamin biosynthesis; precorrin-2 from uroporphyrinogen III: step 1/1. The protein operates within cofactor biosynthesis; adenosylcobalamin biosynthesis; sirohydrochlorin from precorrin-2: step 1/1. Its pathway is porphyrin-containing compound metabolism; siroheme biosynthesis; precorrin-2 from uroporphyrinogen III: step 1/1. It functions in the pathway porphyrin-containing compound metabolism; siroheme biosynthesis; siroheme from sirohydrochlorin: step 1/1. It participates in porphyrin-containing compound metabolism; siroheme biosynthesis; sirohydrochlorin from precorrin-2: step 1/1. Functionally, multifunctional enzyme that catalyzes the SAM-dependent methylations of uroporphyrinogen III at position C-2 and C-7 to form precorrin-2 via precorrin-1. Then it catalyzes the NAD-dependent ring dehydrogenation of precorrin-2 to yield sirohydrochlorin. Finally, it catalyzes the ferrochelation of sirohydrochlorin to yield siroheme. The protein is Siroheme synthase of Vesicomyosocius okutanii subsp. Calyptogena okutanii (strain HA).